Consider the following 151-residue polypeptide: Large ribosomal subunit protein bL9 (151 aa).

Belongs to the bacterial ribosomal protein bL9 family.

In terms of biological role, binds to the 23S rRNA. This Lactobacillus johnsonii (strain CNCM I-12250 / La1 / NCC 533) protein is Large ribosomal subunit protein bL9.